Consider the following 87-residue polypeptide: Small ribosomal subunit protein bS16 (87 aa).

It belongs to the bacterial ribosomal protein bS16 family.

The chain is Small ribosomal subunit protein bS16 from Fusobacterium nucleatum subsp. nucleatum (strain ATCC 25586 / DSM 15643 / BCRC 10681 / CIP 101130 / JCM 8532 / KCTC 2640 / LMG 13131 / VPI 4355).